The primary structure comprises 990 residues: DNA ligase 4 (990 aa).

The interval 57-84 (TQKKGRQPPGPRRKAGPHGHSNLSPHEA) is disordered. ATP contacts are provided by glutamate 324, lysine 326, leucine 327, arginine 331, glutamate 394, phenylalanine 436, glutamate 496, lysine 501, lysine 518, and lysine 520. Lysine 326 (N6-AMP-lysine intermediate) is an active-site residue. Glutamate 394 is a Mg(2+) binding site. Glutamate 496 contacts Mg(2+). BRCT domains lie at 728–821 (PQSK…LPYL) and 900–989 (YMFS…RYQW).

It belongs to the ATP-dependent DNA ligase family. Mg(2+) serves as cofactor.

It localises to the nucleus. The enzyme catalyses ATP + (deoxyribonucleotide)n-3'-hydroxyl + 5'-phospho-(deoxyribonucleotide)m = (deoxyribonucleotide)n+m + AMP + diphosphate.. DNA ligase involved in DNA non-homologous end joining (NHEJ); required for double-strand break (DSB) repair. This is DNA ligase 4 (LIG4) from Phaeosphaeria nodorum (strain SN15 / ATCC MYA-4574 / FGSC 10173) (Glume blotch fungus).